A 500-amino-acid chain; its full sequence is L-arabinose isomerase (500 aa).

4 residues coordinate Mn(2+): Glu-306, Glu-333, His-350, and His-450.

The protein belongs to the arabinose isomerase family. Homohexamer. It depends on Mn(2+) as a cofactor.

The catalysed reaction is beta-L-arabinopyranose = L-ribulose. The protein operates within carbohydrate degradation; L-arabinose degradation via L-ribulose; D-xylulose 5-phosphate from L-arabinose (bacterial route): step 1/3. Functionally, catalyzes the conversion of L-arabinose to L-ribulose. This Enterobacter sp. (strain 638) protein is L-arabinose isomerase.